A 141-amino-acid chain; its full sequence is Hemoglobin subunit alpha-A (141 aa).

The region spanning 1 to 141 (VLSSGDKANV…VSTVLTSKYR (141 aa)) is the Globin domain. Histidine 58 serves as a coordination point for O2. Histidine 87 contributes to the heme b binding site.

It belongs to the globin family. In terms of assembly, heterotetramer of two alpha chains and two beta chains. Red blood cells.

In terms of biological role, involved in oxygen transport from the lung to the various peripheral tissues. The protein is Hemoglobin subunit alpha-A (HBAA) of Caretta caretta (Loggerhead sea turtle).